The primary structure comprises 381 residues: Sensor histidine kinase FlgS (381 aa).

The Histidine kinase domain occupies 177–381 (HLAHEIRNPV…TFEIKILNAS (205 aa)). At H180 the chain carries Phosphohistidine; by autocatalysis.

In terms of assembly, interacts (via its C-terminal kinase domain) with FlhA (via N-terminus). In terms of processing, autophosphorylated.

The catalysed reaction is ATP + protein L-histidine = ADP + protein N-phospho-L-histidine.. Its function is as follows. Member of the two-component regulatory system FlgR/FlgS that induces the transcriptional induction of the genes needed in motility and flagellar biogenesis. Also plays an essential role in bacterial survival at pH 2.5 independently of FlgR. Functions as a sensor protein kinase which is autophosphorylated at a histidine residue and transfers its phosphate group to the conserved aspartic acid residue in the regulatory domain of FlgR. In turn, FlgR functions as a transcriptional regulator initiating transcription from RpoN-dependent promoters. The chain is Sensor histidine kinase FlgS (flgS) from Helicobacter pylori (strain ATCC 700392 / 26695) (Campylobacter pylori).